A 271-amino-acid polypeptide reads, in one-letter code: MSKLASPQSVRALLERHGLFADKRFGQNFLVSEAHLRRIVEAARPFTGPVFEVGPGLGALTRALLEAGAEVTAIEKDLRLRPVLEETLSGLPVRLVFQDALLYPWEEVPQGSLLVANLPYHIATPLVTRLLKTGRFARLVFLVQKEVAERMTARPKTPAYGVLTLRVAHHAVAERLFDLPPGAFFPPPKVWSSLVRLTPTGALDDPGLFRLVEAAFGKRRKTLLNALAAAGYPKARVEEALRALGLPPRVRAEELDLEAFRRLREGLEGAV.

Residues asparagine 28, leucine 30, glycine 54, glutamate 75, aspartate 99, and asparagine 117 each contribute to the S-adenosyl-L-methionine site.

Belongs to the class I-like SAM-binding methyltransferase superfamily. rRNA adenine N(6)-methyltransferase family. RsmA subfamily.

Its subcellular location is the cytoplasm. It carries out the reaction adenosine(1518)/adenosine(1519) in 16S rRNA + 4 S-adenosyl-L-methionine = N(6)-dimethyladenosine(1518)/N(6)-dimethyladenosine(1519) in 16S rRNA + 4 S-adenosyl-L-homocysteine + 4 H(+). Functionally, specifically dimethylates two adjacent adenosines (A1518 and A1519) in the loop of a conserved hairpin near the 3'-end of 16S rRNA in the 30S particle. May play a critical role in biogenesis of 30S subunits. This Thermus thermophilus (strain ATCC 27634 / DSM 579 / HB8) protein is Ribosomal RNA small subunit methyltransferase A.